A 301-amino-acid polypeptide reads, in one-letter code: 2-phosphoglycerate kinase (301 aa).

The ATP-cone domain occupies 2 to 89 (IRVIEKGDKV…FWRRFRKMKV (88 aa)).

The protein belongs to the 2-phosphoglycerate kinase family. A divalent metal cation serves as cofactor.

The catalysed reaction is (2R)-2-phosphoglycerate + ATP = (2R)-2,3-bisphosphoglycerate + ADP + H(+). It functions in the pathway thermoadapter biosynthesis; cyclic 2,3-diphosphoglycerate biosynthesis; cyclic 2,3-diphosphoglycerate from 2-phospho-D-glycerate: step 1/2. Its function is as follows. Catalyzes the phosphorylation of 2-phosphoglycerate to 2,3-diphosphoglycerate. Involved in the biosynthesis of cyclic 2,3-bisphosphoglycerate, a thermoprotectant. This Pyrococcus horikoshii (strain ATCC 700860 / DSM 12428 / JCM 9974 / NBRC 100139 / OT-3) protein is 2-phosphoglycerate kinase.